A 602-amino-acid chain; its full sequence is Transcription factor COE4 (602 aa).

An interaction with DNA region spans residues 64-67; sequence RKSN. The C5-type zinc finger occupies 152-171; sequence CRVLLTHEIMCSRCCDRKSC. Interaction with DNA regions lie at residues 198–205 and 237–240; these read NCLKNAGN and NNSK. Residues 256–338 enclose the IPT/TIG domain; it reads PCIKAISPGE…CKGCPGRFVY (83 aa). Disordered stretches follow at residues 448-476 and 558-602; these read PEPG…SGYG and PVLR…LAYS. Pro residues predominate over residues 560–569; sequence LRPPSSPPQA.

This sequence belongs to the COE family. As to quaternary structure, forms either a homodimer or a heterodimer with a related family member. Interacts with MAPK3/ERK1. Interacts with STAT5A. As to expression, most highly expressed in cytotoxic NK cells, especially CD16(+) NK cells, followed by CD8(+) T-cells.

It is found in the nucleus. Its function is as follows. Transcription factor. Binds to specific sequence motif 5'-CCCNNG[GA]G-3' in regulatory elements of putative target immunoregulatory genes such as NKG7, GZMA, and TBX21. Positively modulates transcription of NKG7. May play a role in regulating FAS/CD95-mediated apoptosis in cytotoxic NK cells and T-cells, probably downstream of interleukin IL2 signaling. This is Transcription factor COE4 (EBF4) from Homo sapiens (Human).